Reading from the N-terminus, the 209-residue chain is Imidazoleglycerol-phosphate dehydratase (209 aa).

It belongs to the imidazoleglycerol-phosphate dehydratase family.

Its subcellular location is the cytoplasm. The catalysed reaction is D-erythro-1-(imidazol-4-yl)glycerol 3-phosphate = 3-(imidazol-4-yl)-2-oxopropyl phosphate + H2O. The protein operates within amino-acid biosynthesis; L-histidine biosynthesis; L-histidine from 5-phospho-alpha-D-ribose 1-diphosphate: step 6/9. The sequence is that of Imidazoleglycerol-phosphate dehydratase from Prochlorococcus marinus (strain MIT 9313).